Consider the following 95-residue polypeptide: Protein S100-A10 (95 aa).

Residues Lys23, Lys28, Lys54, and Lys57 each carry the N6-acetyllysine modification. The EF-hand domain occupies 47-82 (KDPLAVDKIMKDLDQCRDGKVGFQSFLSLVAGLIIA). Residues 60-71 (DQCRDGKVGFQS) are ancestral calcium site.

The protein belongs to the S-100 family. In terms of assembly, heterotetramer containing 2 light chains of S100A10/p11 and 2 heavy chains of ANXA2/p36. Interacts with SCN10A. Interacts with TASOR.

Because S100A10 induces the dimerization of ANXA2/p36, it may function as a regulator of protein phosphorylation in that the ANXA2 monomer is the preferred target (in vitro) of tyrosine-specific kinase. The chain is Protein S100-A10 (S100a10) from Rattus norvegicus (Rat).